The primary structure comprises 602 residues: Elongation factor 4 (602 aa).

In terms of domain architecture, tr-type G spans 7 to 196 (SKIRNFCIIA…HPQNEIKSPT (190 aa)). GTP-binding positions include 19–24 (DHGKST) and 136–139 (NKVD).

This sequence belongs to the TRAFAC class translation factor GTPase superfamily. Classic translation factor GTPase family. LepA subfamily.

Its subcellular location is the cell inner membrane. The catalysed reaction is GTP + H2O = GDP + phosphate + H(+). Functionally, required for accurate and efficient protein synthesis under certain stress conditions. May act as a fidelity factor of the translation reaction, by catalyzing a one-codon backward translocation of tRNAs on improperly translocated ribosomes. Back-translocation proceeds from a post-translocation (POST) complex to a pre-translocation (PRE) complex, thus giving elongation factor G a second chance to translocate the tRNAs correctly. Binds to ribosomes in a GTP-dependent manner. This chain is Elongation factor 4, found in Prochlorococcus marinus (strain MIT 9515).